Here is a 291-residue protein sequence, read N- to C-terminus: MAVVTMKQLLESGVHFGHQTKRWNPKMKRYIFTERNGIYIIDLQQTLSYIDRAYDFVKETVAHGGTVLFIGTKKQAQEAIEEQAARVGMPYVKERWLGGMLTNFSTVYKRLQRLKELEEIEVTGGTEVRTKKEQLVLTREKAKLERTLGGIRDMSRVPSAVWVVDTKKEHIAVGEARKLGIPVVAILDTNCDPDEVDYPIPGNDDAIRSAALLTRVVADAVADGLMARAGASKAADAKPEQSAGEEPLAEWEQALLRGEGTAPAASEEQPAEEPAPAAAEAQTDAAVGTAV.

The interval 256–291 is disordered; it reads LRGEGTAPAASEEQPAEEPAPAAAEAQTDAAVGTAV. Residues 261–291 show a composition bias toward low complexity; that stretch reads TAPAASEEQPAEEPAPAAAEAQTDAAVGTAV.

It belongs to the universal ribosomal protein uS2 family.

The chain is Small ribosomal subunit protein uS2 from Frankia alni (strain DSM 45986 / CECT 9034 / ACN14a).